The chain runs to 506 residues: Histidine ammonia-lyase (506 aa).

The segment at residues 143–145 (ASG) is a cross-link (5-imidazolinone (Ala-Gly)). At Ser144 the chain carries 2,3-didehydroalanine (Ser).

It belongs to the PAL/histidase family. Post-translationally, contains an active site 4-methylidene-imidazol-5-one (MIO), which is formed autocatalytically by cyclization and dehydration of residues Ala-Ser-Gly.

The protein resides in the cytoplasm. It catalyses the reaction L-histidine = trans-urocanate + NH4(+). The protein operates within amino-acid degradation; L-histidine degradation into L-glutamate; N-formimidoyl-L-glutamate from L-histidine: step 1/3. In Salmonella agona (strain SL483), this protein is Histidine ammonia-lyase.